Consider the following 180-residue polypeptide: Stathmin-3 (180 aa).

S-palmitoyl cysteine attachment occurs at residues cysteine 22 and cysteine 24. Residues 38-180 (GDMEVKQLDK…NKEQREEMSG (143 aa)) form the SLD domain. Residues serine 50, serine 60, serine 65, serine 68, serine 72, serine 73, and serine 81 each carry the phosphoserine modification. Residues 58 to 81 (LKSPSDLSPESPVLSSPPKRKDAS) are disordered. Low complexity predominate over residues 60–74 (SPSDLSPESPVLSSP). Residues 75-179 (PKRKDASLEE…RNKEQREEMS (105 aa)) adopt a coiled-coil conformation.

Belongs to the stathmin family. As to quaternary structure, interacts with STAT3. Interacts with CLU (secreted form); this interaction may act as an important modulator during neuronal differentiation. In terms of processing, N-terminal palmitoylation promotes specific anchoring to the cytosolic leaflet of Golgi membranes and subsequent vesicular trafficking along dendrites and axons. Neuronal Stathmins are substrates for palmitoyltransferases ZDHHC3, ZDHHC7 and ZDHHC15. In terms of tissue distribution, neuron specific.

It localises to the golgi apparatus. The protein resides in the cell projection. The protein localises to the growth cone. Its subcellular location is the axon. It is found in the cytoplasm. It localises to the cytosol. Its function is as follows. Exhibits microtubule-destabilizing activity, which is antagonized by STAT3. The polypeptide is Stathmin-3 (Stmn3) (Rattus norvegicus (Rat)).